Consider the following 160-residue polypeptide: G-protein-signaling modulator 3 (160 aa).

The tract at residues 1–55 (MEAERPQEEEDGEQGPPQDEEGWPPPNSTTRPWRSAPPSPPPPGTRHTALGPRSA) is disordered. Positions 7–22 (QEEEDGEQGPPQDEEG) are enriched in acidic residues. A phosphoserine mark is found at Ser-35, Ser-39, Ser-56, and Ser-59. Over residues 35 to 44 (SAPPSPPPPG) the composition is skewed to pro residues. At Thr-62 the chain carries Phosphothreonine. GoLoco domains are found at residues 62-84 (TELL…RATF), 104-126 (REQL…RSEP), and 132-155 (GQEL…RSRP).

In terms of tissue distribution, expressed in heart, placenta, lung and liver.

The protein localises to the cytoplasm. In terms of biological role, interacts with subunit of G(i) alpha proteins and regulates the activation of G(i) alpha proteins. The chain is G-protein-signaling modulator 3 (GPSM3) from Homo sapiens (Human).